The following is a 95-amino-acid chain: GLCLASQLLTGLFLAMHYTSDIATAFSSVAHICRDVNYGWLIRNMHANGASFFFICIYLHIGRGLYYGSYLYKETWNIGVVLLLLVMMTAFVGYV.

3 helical membrane passes run 1 to 16, 40 to 61, and 76 to 95; these read GLCL…FLAM, WLIR…YLHI, and WNIG…VGYV. Heme b is bound by residues His46 and His60.

This sequence belongs to the cytochrome b family. The cytochrome bc1 complex contains 3 respiratory subunits (MT-CYB, CYC1 and UQCRFS1), 2 core proteins (UQCRC1 and UQCRC2) and probably 6 low-molecular weight proteins. It depends on heme b as a cofactor.

The protein resides in the mitochondrion inner membrane. Its function is as follows. Component of the ubiquinol-cytochrome c reductase complex (complex III or cytochrome b-c1 complex) that is part of the mitochondrial respiratory chain. The b-c1 complex mediates electron transfer from ubiquinol to cytochrome c. Contributes to the generation of a proton gradient across the mitochondrial membrane that is then used for ATP synthesis. In Gomphosus varius (Bird wrasse), this protein is Cytochrome b (mt-cyb).